The primary structure comprises 562 residues: Valerena-4,7(11)-diene synthase (562 aa).

Positions 314, 318, and 467 each coordinate Mg(2+). The short motif at 314–318 (DDTYD) is the DDXXD motif element.

Belongs to the terpene synthase family. Requires Mg(2+) as cofactor. In terms of tissue distribution, predominantly expressed in root.

The catalysed reaction is (2E,6E)-farnesyl diphosphate = valerena-4,7(11)-diene + diphosphate. Catalyzes formation of valerena-4,7(11)-diene, one of the active ingredients responsible for the sedative effect extracted from Valeriana officinalis root. This is Valerena-4,7(11)-diene synthase (TPS2) from Valeriana officinalis (Valerian).